Reading from the N-terminus, the 99-residue chain is MALTKAEMSEYLFDKLGLSKRDAKELVELFFEEIRRALENGEQVKLSGFGNFDLRDKNQRPGRNPKTGEDIPITARRVVTFRPGQKLKSRVENASPKDK.

The segment at 49-75 (FGNFDLRDKNQRPGRNPKTGEDIPITA) is disordered.

The protein belongs to the bacterial histone-like protein family. Heterodimer of an alpha and a beta chain.

Its function is as follows. This protein is one of the two subunits of integration host factor, a specific DNA-binding protein that functions in genetic recombination as well as in transcriptional and translational control. The protein is Integration host factor subunit alpha of Klebsiella pneumoniae (strain 342).